A 319-amino-acid polypeptide reads, in one-letter code: 4-hydroxy-3-methylbut-2-enyl diphosphate reductase (319 aa).

C15 contacts [4Fe-4S] cluster. H44 and H77 together coordinate (2E)-4-hydroxy-3-methylbut-2-enyl diphosphate. Positions 44 and 77 each coordinate dimethylallyl diphosphate. Residues H44 and H77 each coordinate isopentenyl diphosphate. Residue C99 coordinates [4Fe-4S] cluster. H127 contributes to the (2E)-4-hydroxy-3-methylbut-2-enyl diphosphate binding site. H127 serves as a coordination point for dimethylallyl diphosphate. Position 127 (H127) interacts with isopentenyl diphosphate. E129 (proton donor) is an active-site residue. T172 contributes to the (2E)-4-hydroxy-3-methylbut-2-enyl diphosphate binding site. C202 is a [4Fe-4S] cluster binding site. The (2E)-4-hydroxy-3-methylbut-2-enyl diphosphate site is built by S230, S231, N232, and S274. Dimethylallyl diphosphate contacts are provided by S230, S231, N232, and S274. Isopentenyl diphosphate is bound by residues S230, S231, N232, and S274.

This sequence belongs to the IspH family. [4Fe-4S] cluster serves as cofactor.

It carries out the reaction isopentenyl diphosphate + 2 oxidized [2Fe-2S]-[ferredoxin] + H2O = (2E)-4-hydroxy-3-methylbut-2-enyl diphosphate + 2 reduced [2Fe-2S]-[ferredoxin] + 2 H(+). The catalysed reaction is dimethylallyl diphosphate + 2 oxidized [2Fe-2S]-[ferredoxin] + H2O = (2E)-4-hydroxy-3-methylbut-2-enyl diphosphate + 2 reduced [2Fe-2S]-[ferredoxin] + 2 H(+). The protein operates within isoprenoid biosynthesis; dimethylallyl diphosphate biosynthesis; dimethylallyl diphosphate from (2E)-4-hydroxy-3-methylbutenyl diphosphate: step 1/1. It functions in the pathway isoprenoid biosynthesis; isopentenyl diphosphate biosynthesis via DXP pathway; isopentenyl diphosphate from 1-deoxy-D-xylulose 5-phosphate: step 6/6. Catalyzes the conversion of 1-hydroxy-2-methyl-2-(E)-butenyl 4-diphosphate (HMBPP) into a mixture of isopentenyl diphosphate (IPP) and dimethylallyl diphosphate (DMAPP). Acts in the terminal step of the DOXP/MEP pathway for isoprenoid precursor biosynthesis. This chain is 4-hydroxy-3-methylbut-2-enyl diphosphate reductase, found in Xanthomonas euvesicatoria pv. vesicatoria (strain 85-10) (Xanthomonas campestris pv. vesicatoria).